The chain runs to 602 residues: Prostaglandin G/H synthase 1 (602 aa).

The signal sequence occupies residues methionine 1–leucine 26. The 39-residue stretch at proline 34 to threonine 72 folds into the EGF-like domain. 4 disulfide bridges follow: cysteine 38/cysteine 49, cysteine 39/cysteine 161, cysteine 43/cysteine 59, and cysteine 61/cysteine 71. 3 N-linked (GlcNAc...) asparagine glycosylation sites follow: asparagine 70, asparagine 106, and asparagine 146. Histidine 209 acts as the Proton acceptor in catalysis. Tyrosine 387 acts as the For cyclooxygenase activity in catalysis. Histidine 390 provides a ligand contact to heme b. Asparagine 412 is a glycosylation site (N-linked (GlcNAc...) asparagine). A disulfide bridge links cysteine 571 with cysteine 577.

The protein belongs to the prostaglandin G/H synthase family. In terms of assembly, homodimer. Requires heme b as cofactor.

It is found in the microsome membrane. The protein resides in the endoplasmic reticulum membrane. It catalyses the reaction (5Z,8Z,11Z,14Z)-eicosatetraenoate + AH2 + 2 O2 = prostaglandin H2 + A + H2O. The catalysed reaction is (5Z,8Z,11Z,14Z)-eicosatetraenoate + 2 O2 = prostaglandin G2. It carries out the reaction prostaglandin G2 + AH2 = prostaglandin H2 + A + H2O. The enzyme catalyses (9Z,12Z)-octadecadienoate + AH2 + O2 = (9R)-hydroxy-(10E,12Z)-octadecadienoate + A + H2O. It catalyses the reaction (9Z,12Z)-octadecadienoate + AH2 + O2 = (9S)-hydroxy-(10E,12Z)-octadecadienoate + A + H2O. The catalysed reaction is (9Z,12Z)-octadecadienoate + AH2 + O2 = (13S)-hydroxy-(9Z,11E)-octadecadienoate + A + H2O. It carries out the reaction (9Z,12Z)-octadecadienoate + AH2 + O2 = (13R)-hydroxy-(9Z,11E)-octadecadienoate + A + H2O. The protein operates within lipid metabolism; prostaglandin biosynthesis. With respect to regulation, the cyclooxygenase activity is inhibited by nonsteroidal anti-inflammatory drugs (NSAIDs) including ibuprofen, flurbiprofen, ketoprofen, naproxen, flurbiprofen, anirolac, fenclofenac and diclofenac. Functionally, dual cyclooxygenase and peroxidase that plays an important role in the biosynthesis pathway of prostanoids, a class of C20 oxylipins mainly derived from arachidonate ((5Z,8Z,11Z,14Z)-eicosatetraenoate, AA, C20:4(n-6)), with a particular role in the inflammatory response. The cyclooxygenase activity oxygenates AA to the hydroperoxy endoperoxide prostaglandin G2 (PGG2), and the peroxidase activity reduces PGG2 to the hydroxy endoperoxide prostaglandin H2 (PGH2), the precursor of all 2-series prostaglandins and thromboxanes. This complex transformation is initiated by abstraction of hydrogen at carbon 13 (with S-stereochemistry), followed by insertion of molecular O2 to form the endoperoxide bridge between carbon 9 and 11 that defines prostaglandins. The insertion of a second molecule of O2 (bis-oxygenase activity) yields a hydroperoxy group in PGG2 that is then reduced to PGH2 by two electrons. Involved in the constitutive production of prostanoids in particular in the stomach and platelets. In gastric epithelial cells, it is a key step in the generation of prostaglandins, such as prostaglandin E2 (PGE2), which plays an important role in cytoprotection. In platelets, it is involved in the generation of thromboxane A2 (TXA2), which promotes platelet activation and aggregation, vasoconstriction and proliferation of vascular smooth muscle cells. Can also use linoleate (LA, (9Z,12Z)-octadecadienoate, C18:2(n-6)) as substrate and produce hydroxyoctadecadienoates (HODEs) in a regio- and stereospecific manner, being (9R)-HODE ((9R)-hydroxy-(10E,12Z)-octadecadienoate) and (13S)-HODE ((13S)-hydroxy-(9Z,11E)-octadecadienoate) its major products. This is Prostaglandin G/H synthase 1 from Rattus norvegicus (Rat).